The sequence spans 355 residues: uncharacterized protein (355 aa).

58 to 65 (GYIIFGIK) contributes to the ATP binding site.

This is an uncharacterized protein from Ureaplasma parvum serovar 3 (strain ATCC 700970).